Reading from the N-terminus, the 1514-residue chain is ABC transporter C family member 3 (1514 aa).

10 consecutive transmembrane segments (helical) span residues 35-55, 83-103, 116-136, 153-173, 183-203, 325-345, 364-386, 439-459, 463-483, and 551-571; these read PLFLRWLSGFLHSVLLLVLFF, ALFCSLALSLLNLVLMSLSGF, LVSSLGFLLGMVSWGVLSICL, LWLVFYLVVSCYSLVVDFVMY, LLVFDIVAFIAAVFLGYVAVL, ILVTAFFAFIYTVASYVGPAL, YVLVITFFAAKIVECLSQRHWFF, WYMHDPWMVLLQVGLALWILY, GLASIAALVATIIVMLINFPF, and FVFWGAPTLVSVSTFGACILL. An ABC transmembrane type-1 1 domain is found at 325–606; sequence ILVTAFFAFI…LPDTISMIVQ (282 aa). Residues 640–863 form the ABC transporter 1 domain; the sequence is VEVINSTLSW…GTDFMELIGA (224 aa). Position 675-682 (675-682) interacts with ATP; sequence GTVGSGKS. The next 5 helical transmembrane spans lie at 940 to 960, 987 to 1007, 1077 to 1097, 1181 to 1201, and 1205 to 1225; these read YITLAYGGALVPFILLGQVLF, LSTLMIVYVALAFGSSLCILL, IGIIGVMSQVSWLVFLVFIPV, LSSLTFVFSLVFLVSIPTGVI, and LAGLAVTYGLSLNTLQAWLIW. Residues 950-1232 enclose the ABC transmembrane type-1 2 domain; the sequence is VPFILLGQVL…LIWTLCNLEN (283 aa). The 233-residue stretch at 1271–1503 folds into the ABC transporter 2 domain; that stretch reads IRDLQVRYAP…KSSSFSKLVA (233 aa). 1303-1310 serves as a coordination point for ATP; that stretch reads GRTGSGKS.

The protein belongs to the ABC transporter superfamily. ABCC family. Conjugate transporter (TC 3.A.1.208) subfamily. In terms of tissue distribution, ubiquitous.

The protein localises to the membrane. The enzyme catalyses ATP + H2O + xenobioticSide 1 = ADP + phosphate + xenobioticSide 2.. Glutathione-conjugate transport is inhibited by decyl-glutathione and, to a lower extent, by GS-GS, but not by GSH. All transports are inhibited by vanadate. Its function is as follows. Pump for glutathione S-conjugates. Mediates the transport of glutathione conjugates such as chlorodinitrobenzene-GS (DNB-GS), and of chlorophyll catabolites such as Bn-NCC-1. Also transports heavy metals such as cadmium (Cd). The sequence is that of ABC transporter C family member 3 (ABCC3) from Arabidopsis thaliana (Mouse-ear cress).